Consider the following 224-residue polypeptide: BTB/POZ domain-containing protein At5g48510 (224 aa).

The BTB domain occupies 24–98 (VDVMLKAKNS…ICSDGSMLSA (75 aa)).

Interacts with CUL3A.

It participates in protein modification; protein ubiquitination. Its function is as follows. May act as a substrate-specific adapter of an E3 ubiquitin-protein ligase complex (CUL3-RBX1-BTB) which mediates the ubiquitination and subsequent proteasomal degradation of target proteins. This chain is BTB/POZ domain-containing protein At5g48510, found in Arabidopsis thaliana (Mouse-ear cress).